The sequence spans 1605 residues: Kinesin-like protein klp-12 (1605 aa).

The Kinesin motor domain occupies 5–358; that stretch reads CVQVALRIRP…MKYANRAKEI (354 aa). 84 to 91 is an ATP binding site; the sequence is GQTGSGKT. Residues Thr-91 and Ser-217 each coordinate Mg(2+). Disordered stretches follow at residues 548 to 596, 1085 to 1152, and 1198 to 1232; these read GENV…EESE, VSDA…SNNN, and SRSNLMSSSSSTTTTTLSSSNLLNPRGTTSSSSSK. A compositionally biased stretch (polar residues) spans 550–559; that stretch reads NVSSEYSSMA. Over residues 560-596 the composition is skewed to acidic residues; sequence QDEDGTSNEAEELLDEEDLDEDEDETAEEKQEQEESE. Residues 575-730 are a coiled coil; that stretch reads EEDLDEDEDE…KKAKVELIKK (156 aa). The segment covering 1116–1152 has biased composition (polar residues); sequence VSTSPASTSFANSTSQSPSFSRNTRFRSTVGGVSNNN. Low complexity predominate over residues 1200–1232; that stretch reads SNLMSSSSSTTTTTLSSSNLLNPRGTTSSSSSK. WD repeat units follow at residues 1282–1319, 1389–1427, 1525–1566, and 1573–1605; these read GHARGVLSVDVNEKLMVTGSKDRTAKLWDIEACREIRT, FLETLITAADVDPTGQLLFTSFSAYVRVWNLREWKPLGR, AHQQ…RMKL, and AHQEGINDMCSTKSMLFTASGDSTVGFWKSNAV.

This sequence belongs to the TRAFAC class myosin-kinesin ATPase superfamily. Kinesin family. In terms of assembly, component of a complex at least composed of alpha tubulin and beta tubulin. Within the complex, interacts with the alpha tubulin and beta tubulin dimer.

Its subcellular location is the cytoplasm. It is found in the cytoskeleton. Microtubule-binding motor protein which has ATPase activity. In complex with alpha and beta tubulins, preferentially binds to the growing microtubule plus-end to stabilize it and detaches following ATP hydrolysis. Negatively regulates axonal length through inhibiting microtubule polymerization at its plus-end. The polypeptide is Kinesin-like protein klp-12 (Caenorhabditis elegans).